The sequence spans 346 residues: Aspartate-semialdehyde dehydrogenase (346 aa).

NADP(+)-binding positions include Thr10 to Gly13 and Arg38 to Ser39. Arg98 is a binding site for phosphate. The active-site Acyl-thioester intermediate is the Cys131. Substrate is bound at residue Gln158. Ser161–Gly162 contacts NADP(+). Residue Lys228 participates in phosphate binding. A substrate-binding site is contributed by Arg250. The Proton acceptor role is filled by His257. Asn326 contributes to the NADP(+) binding site.

This sequence belongs to the aspartate-semialdehyde dehydrogenase family. As to quaternary structure, homodimer.

It catalyses the reaction L-aspartate 4-semialdehyde + phosphate + NADP(+) = 4-phospho-L-aspartate + NADPH + H(+). It functions in the pathway amino-acid biosynthesis; L-lysine biosynthesis via DAP pathway; (S)-tetrahydrodipicolinate from L-aspartate: step 2/4. The protein operates within amino-acid biosynthesis; L-methionine biosynthesis via de novo pathway; L-homoserine from L-aspartate: step 2/3. It participates in amino-acid biosynthesis; L-threonine biosynthesis; L-threonine from L-aspartate: step 2/5. Catalyzes the NADPH-dependent formation of L-aspartate-semialdehyde (L-ASA) by the reductive dephosphorylation of L-aspartyl-4-phosphate. The chain is Aspartate-semialdehyde dehydrogenase from Mycolicibacterium smegmatis (Mycobacterium smegmatis).